A 127-amino-acid polypeptide reads, in one-letter code: Fumarate reductase subunit C (127 aa).

Helical transmembrane passes span 30-50 (ATVLPLILFTLFLTFGLGCLV), 58-78 (GWLAFMANPIVVAINIVALLG), and 107-127 (IIVLTQWAAVAFISLIVLIVV).

It belongs to the FrdC family. Part of an enzyme complex containing four subunits: a flavoprotein (FrdA), an iron-sulfur protein (FrdB), and two hydrophobic anchor proteins (FrdC and FrdD).

Its subcellular location is the cell inner membrane. Anchors the catalytic components of the fumarate reductase complex to the cell membrane, binds quinones. The protein is Fumarate reductase subunit C of Vibrio parahaemolyticus serotype O3:K6 (strain RIMD 2210633).